Here is a 341-residue protein sequence, read N- to C-terminus: N-acetyl-gamma-glutamyl-phosphate reductase (341 aa).

Cys147 is a catalytic residue.

This sequence belongs to the NAGSA dehydrogenase family. Type 1 subfamily.

The protein localises to the cytoplasm. It carries out the reaction N-acetyl-L-glutamate 5-semialdehyde + phosphate + NADP(+) = N-acetyl-L-glutamyl 5-phosphate + NADPH + H(+). It participates in amino-acid biosynthesis; L-arginine biosynthesis; N(2)-acetyl-L-ornithine from L-glutamate: step 3/4. Catalyzes the NADPH-dependent reduction of N-acetyl-5-glutamyl phosphate to yield N-acetyl-L-glutamate 5-semialdehyde. The chain is N-acetyl-gamma-glutamyl-phosphate reductase from Dehalococcoides mccartyi (strain ATCC BAA-2266 / KCTC 15142 / 195) (Dehalococcoides ethenogenes (strain 195)).